The sequence spans 236 residues: Probable apoptosis inhibitor 2 (236 aa).

Residues 85-150 form a BIR repeat; it reads RKRSFASFKW…AHAADCAFRR (66 aa). The Zn(2+) site is built by C123, C126, H142, and C146. The RING-type zinc finger occupies 189 to 223; it reads CKVCFVNEKSVCFLPCRHLVVCAECSPRCKRCCVC.

In Orgyia pseudotsugata multicapsid polyhedrosis virus (OpMNPV), this protein is Probable apoptosis inhibitor 2 (IAP2).